The chain runs to 143 residues: Transcriptional regulator MraZ (143 aa).

SpoVT-AbrB domains follow at residues 5-47 (THSP…SQKE) and 76-119 (ASDE…DADA).

It belongs to the MraZ family. Forms oligomers.

The protein localises to the cytoplasm. The protein resides in the nucleoid. In Paenarthrobacter aurescens (strain TC1), this protein is Transcriptional regulator MraZ.